The following is a 129-amino-acid chain: Small ribosomal subunit protein uS11 (129 aa).

It belongs to the universal ribosomal protein uS11 family. Part of the 30S ribosomal subunit. Interacts with proteins S7 and S18. Binds to IF-3.

Its function is as follows. Located on the platform of the 30S subunit, it bridges several disparate RNA helices of the 16S rRNA. Forms part of the Shine-Dalgarno cleft in the 70S ribosome. The chain is Small ribosomal subunit protein uS11 from Escherichia fergusonii (strain ATCC 35469 / DSM 13698 / CCUG 18766 / IAM 14443 / JCM 21226 / LMG 7866 / NBRC 102419 / NCTC 12128 / CDC 0568-73).